Consider the following 278-residue polypeptide: MTVLHSVDFFPSGNASVAIEPRLPQADFPEHHHDFYEIVIVEHGTGIHVFNGQPYTITGGMVCFVRDHDRHLYEHTDNLCLTNVLYRSPDRFQFLAGLNQLLPQEQDGQYPSHWRVNHSVLQQVRQLVAQMEQQEGENDLPSTASREILFMQLLLLLRKSSLQENLENSASRLNLLLAWLEDHFADEVNWDAVADQFSLSLRTLHRQLKQQTGLTPQRYLNRLRLMKARHLLRHSEASVTDIAYRCGFSDSNHFSTLFRREFNWSPRDIRQGRDGFLQ.

The 99-residue stretch at 174–272 folds into the HTH araC/xylS-type domain; sequence NLLLAWLEDH…NWSPRDIRQG (99 aa). 2 consecutive DNA-binding regions (H-T-H motif) follow at residues 191 to 212 and 239 to 262; these read DAVADQFSLSLRTLHRQLKQQT and VTDIAYRCGFSDSNHFSTLFRREF.

Binds DNA as a dimer.

It localises to the cytoplasm. Its function is as follows. Activates expression of the rhaBAD and rhaT operons. The sequence is that of HTH-type transcriptional activator RhaS from Escherichia coli O81 (strain ED1a).